The primary structure comprises 237 residues: MPKHGKKYLAALAKVDRSRFYTPAEAIALVKETSYTKFDATVEAHLRLGIDPRHADQNIRTTVALPHGTGKTVRVLVFAQGEALQTALDAGADYAGSDDLIARIDRENFFDFDVAIATPDMMGKVGRIGRKLGPRGLMPNPKSGTVVQPADLARTIREVKGGRVEIRNDKTGILHVAIGKVSFTSQQLSENLAALMEAVKAAKPSGAKGTYIRSVTLTSTMGPGVPVDLVAVQNLKL.

Belongs to the universal ribosomal protein uL1 family. As to quaternary structure, part of the 50S ribosomal subunit.

Its function is as follows. Binds directly to 23S rRNA. The L1 stalk is quite mobile in the ribosome, and is involved in E site tRNA release. Protein L1 is also a translational repressor protein, it controls the translation of the L11 operon by binding to its mRNA. This is Large ribosomal subunit protein uL1 from Chloroflexus aggregans (strain MD-66 / DSM 9485).